A 357-amino-acid polypeptide reads, in one-letter code: CRISPR system Cms protein Csm5 (357 aa).

The protein belongs to the CRISPR-associated Csm5 family. In terms of assembly, part of the Csm effector complex that includes at least Cas10(1), Csm2(3), Csm3(5), Csm4(1), Csm5(1) and mature crRNA. The Csm complex is elongated and slightly twisted with a maximal length of 215 Angstroms and a diameter of 75-80 Angstroms. It has been modeled to have a central protein filamant of Csm3 subunits along which the dsRNA helix of paired crRNA and target RNA binds. The filament is capped at one end by Cas10 and Csm4 and at the other end by Csm5; ssDNA is thought to bind to the N-terminal HD domain of Cas10. Csm with a precursor crRNA does not include Csm5, while Cas6, the enzyme probably involved in pre-crRNA processing, is found associated with a subset of the Csm complex.

In terms of biological role, CRISPR (clustered regularly interspaced short palindromic repeat) is an adaptive immune system that provides protection against mobile genetic elements (viruses, transposable elements and conjugative plasmids). CRISPR clusters contain spacers, sequences complementary to antecedent mobile elements, and target invading nucleic acids. CRISPR clusters are transcribed and processed into CRISPR RNA (crRNA). The type III-A Csm effector complex binds crRNA and acts as a crRNA-guided RNase, DNase and cyclic oligoadenylate synthase; binding of target RNA cognate to the crRNA is required for all activities. In a heterologous host this Csm effector complex restricts ssRNA phage MS2, suggesting it may target RNA viruses in vivo. Functionally, csm functions as a non-specific ssDNase. Base-pairing between crRNA and target RNA to form a ternary Csm complex activates a ssDNase activity; target RNA cleavage suppresses the ssDNase, a temporal control that prevents uncontrolled DNA degradation. Viral RNA transcripts probably tether the Csm complex to the viral genome, recruiting Cas10 ssDNA activity which is able to degrade DNA in the transcription bubble, spatially controlling the DNase activity. Its function is as follows. This subunit might be involved in maturation of a crRNA intermediate to its mature form. The sequence is that of CRISPR system Cms protein Csm5 from Streptococcus thermophilus.